The following is a 126-amino-acid chain: Acidic phospholipase A2 2 (126 aa).

Positions Ser1–Leu7 are excised as a propeptide. Intrachain disulfides connect Cys18–Cys78, Cys33–Cys125, Cys35–Cys51, Cys50–Cys106, Cys57–Cys99, Cys67–Cys92, and Cys85–Cys97. Tyr34, Gly36, and Gly38 together coordinate Ca(2+). His54 is a catalytic residue. Residue Asp55 coordinates Ca(2+). Asp100 is a catalytic residue.

Belongs to the phospholipase A2 family. Group I subfamily. D49 sub-subfamily. In terms of assembly, heterodimer formed between two homologous isoforms: isoform 1 and isoform 2. It depends on Ca(2+) as a cofactor. As to expression, expressed by the venom gland.

It localises to the secreted. It catalyses the reaction a 1,2-diacyl-sn-glycero-3-phosphocholine + H2O = a 1-acyl-sn-glycero-3-phosphocholine + a fatty acid + H(+). PLA2 catalyzes the calcium-dependent hydrolysis of the 2-acyl groups in 3-sn-phosphoglycerides. In Naja sagittifera (Andaman cobra), this protein is Acidic phospholipase A2 2.